The sequence spans 659 residues: Siderophore transporter fer7 (659 aa).

The interval 1 to 62 (MSNQAQDQPE…ADASSAREGQ (62 aa)) is disordered. The span at 31–41 (QSVSAHGNTSL) shows a compositional bias: polar residues. Asn38 carries an N-linked (GlcNAc...) asparagine glycan. A compositionally biased stretch (basic and acidic residues) spans 42-54 (NKKDRVSAVRDAD). Helical transmembrane passes span 79–99 (NSPIVYTVYASLAAVTICFAL), 121–141 (LFGVIATVEAILNAVSKPFIA), 150–170 (QTAYFLVAVFYTIGFVVVASA), 208–228 (GVVTALTSSPFIVLPWVGNLI), 245–265 (GMFAIMAPVCVAPIILVLMYV), 316–336 (LVGLFLLALSFSLLLVPFSIY), 348–368 (IIAMFVCGGVILGMFLAWEIL), and 379–399 (VWYNRTFLLAVTIDIFYFMGG). The N-linked (GlcNAc...) asparagine glycan is linked to Asn415. Helical transmembrane passes span 424-444 (VVNALATCALSVFGLAAGFYL) and 451-471 (KFLQIGGLVIRIVAMGLYLYG). N-linked (GlcNAc...) asparagine glycosylation occurs at Asn475. 3 helical membrane-spanning segments follow: residues 478 to 498 (TMVVAWSQILNSLGGACSVVG), 528 to 548 (AIGSAIAAGIWTGTLPDYLAA), and 590 to 610 (PIFIVALVLAFIPLFAGLLMP).

Belongs to the major facilitator superfamily.

Its subcellular location is the membrane. In terms of biological role, siderophore transporter; part of the gene cluster that mediates the biosynthesis of siderophore ferrichrome A which is contributing to organismal virulence. In Mycosarcoma maydis (Corn smut fungus), this protein is Siderophore transporter fer7.